We begin with the raw amino-acid sequence, 360 residues long: 3-dehydroquinate synthase (360 aa).

NAD(+)-binding positions include 104–108 (GVIGD), 128–129 (TT), Lys141, and 168–171 (FLDT). Zn(2+)-binding residues include Glu183, His243, and His260.

Belongs to the sugar phosphate cyclases superfamily. Dehydroquinate synthase family. Co(2+) is required as a cofactor. The cofactor is Zn(2+). Requires NAD(+) as cofactor.

It localises to the cytoplasm. It catalyses the reaction 7-phospho-2-dehydro-3-deoxy-D-arabino-heptonate = 3-dehydroquinate + phosphate. It functions in the pathway metabolic intermediate biosynthesis; chorismate biosynthesis; chorismate from D-erythrose 4-phosphate and phosphoenolpyruvate: step 2/7. In terms of biological role, catalyzes the conversion of 3-deoxy-D-arabino-heptulosonate 7-phosphate (DAHP) to dehydroquinate (DHQ). This chain is 3-dehydroquinate synthase, found in Streptococcus equi subsp. equi (strain 4047).